A 332-amino-acid chain; its full sequence is Ketol-acid reductoisomerase (NADP(+)) (332 aa).

Residues 2 to 182 (AKVYYDEDAS…GCTRAGLIET (181 aa)) form the KARI N-terminal Rossmann domain. NADP(+)-binding positions include 25-28 (YGSQ), S51, S53, and 83-86 (DTIQ). H108 is a catalytic residue. G134 provides a ligand contact to NADP(+). The KARI C-terminal knotted domain maps to 183-327 (TFKEETETDL…KELRKMMPWL (145 aa)). Residues D191, E195, E227, and E231 each contribute to the Mg(2+) site. S252 provides a ligand contact to substrate.

The protein belongs to the ketol-acid reductoisomerase family. Mg(2+) serves as cofactor.

It catalyses the reaction (2R)-2,3-dihydroxy-3-methylbutanoate + NADP(+) = (2S)-2-acetolactate + NADPH + H(+). The enzyme catalyses (2R,3R)-2,3-dihydroxy-3-methylpentanoate + NADP(+) = (S)-2-ethyl-2-hydroxy-3-oxobutanoate + NADPH + H(+). Its pathway is amino-acid biosynthesis; L-isoleucine biosynthesis; L-isoleucine from 2-oxobutanoate: step 2/4. It functions in the pathway amino-acid biosynthesis; L-valine biosynthesis; L-valine from pyruvate: step 2/4. Functionally, involved in the biosynthesis of branched-chain amino acids (BCAA). Catalyzes an alkyl-migration followed by a ketol-acid reduction of (S)-2-acetolactate (S2AL) to yield (R)-2,3-dihydroxy-isovalerate. In the isomerase reaction, S2AL is rearranged via a Mg-dependent methyl migration to produce 3-hydroxy-3-methyl-2-ketobutyrate (HMKB). In the reductase reaction, this 2-ketoacid undergoes a metal-dependent reduction by NADPH to yield (R)-2,3-dihydroxy-isovalerate. This chain is Ketol-acid reductoisomerase (NADP(+)), found in Persephonella marina (strain DSM 14350 / EX-H1).